The sequence spans 295 residues: Small ribosomal subunit protein uS2 (295 aa).

The interval threonine 247–alanine 295 is disordered.

It belongs to the universal ribosomal protein uS2 family.

The chain is Small ribosomal subunit protein uS2 from Rickettsia conorii (strain ATCC VR-613 / Malish 7).